A 2214-amino-acid chain; its full sequence is Genome polyprotein (2214 aa).

Disordered regions lie at residues 1-21 (MGAQ…VATG) and 600-619 (KPQK…VNSQ). G2 carries the N-myristoyl glycine; by host lipid modification. Residues 2-1525 (GAQVSSQKVG…NLNRAMTILQ (1524 aa)) are Cytoplasmic-facing. Amphipathic alpha-helix regions lie at residues 580–601 (QGIE…QPKP) and 581–601 (GIEE…QPKP). The span at 606–619 (TAQSTPSTSGVNSQ) shows a compositional bias: polar residues. Catalysis depends on for protease 2A activity residues H906 and D924. C941 and C943 together coordinate Zn(2+). The active-site For protease 2A activity is the C995. Zn(2+) is bound by residues C1001 and H1003. The interval 1133 to 1205 (GDSWLKKFTE…HQSCPSQEQQ (73 aa)) is membrane-binding. Positions 1133–1271 (GDSWLKKFTE…SPGTGKSIAT (139 aa)) are oligomerization. Positions 1154-1158 (SNKIS) are RNA-binding. In terms of domain architecture, SF3 helicase spans 1237 to 1393 (ENTINNYIQF…SEHSIKGKLN (157 aa)). 1261 to 1268 (GSPGTGKS) is a binding site for ATP. Zn(2+)-binding residues include C1401, C1404, C1413, and C1418. A C4-type zinc finger spans residues 1401 to 1418 (CKDCPQPANFKKCCPLVC). An RNA-binding region spans residues 1445–1452 (ERNRRANI). The oligomerization stretch occupies residues 1456 to 1461 (MEALFQ). Residues 1526–1541 (AVTTFAAVAAVVYVMY) lie within the membrane without spanning it. Residues 1542–2214 (KLFAGHQGAY…TLYRRWLDSF (673 aa)) are Cytoplasmic-facing. Y1551 bears the O-(5'-phospho-RNA)-tyrosine mark. The Peptidase C3 domain maps to 1571-1749 (GPGFDYAVAM…FAAALKRSYF (179 aa)). Residues H1610, E1641, and C1717 each act as for protease 3C activity in the active site. The 116-residue stretch at 1980 to 2095 (EKLFAFDYTG…SYPHEVDASL (116 aa)) folds into the RdRp catalytic domain. Positions 1986 and 2081 each coordinate Mg(2+).

It belongs to the picornaviruses polyprotein family. Interacts with capsid protein VP1 and capsid protein VP3 to form heterotrimeric protomers. As to quaternary structure, interacts with capsid protein VP0, and capsid protein VP3 to form heterotrimeric protomers. Five protomers subsequently associate to form pentamers which serve as building blocks for the capsid. Interacts with capsid protein VP2, capsid protein VP3 and capsid protein VP4 following cleavage of capsid protein VP0. In terms of assembly, interacts with capsid protein VP1 and capsid protein VP3 in the mature capsid. Interacts with capsid protein VP0 and capsid protein VP1 to form heterotrimeric protomers. Five protomers subsequently associate to form pentamers which serve as building blocks for the capsid. Interacts with capsid protein VP4 in the mature capsid. Interacts with protein 2C; this interaction may be important for virion morphogenesis. As to quaternary structure, interacts with capsid protein VP1 and capsid protein VP3. In terms of assembly, homodimer. Homohexamer; forms a hexameric ring structure with 6-fold symmetry characteristic of AAA+ ATPases. Interacts (via N-terminus) with host RTN3 (via reticulon domain); this interaction is important for viral replication. Interacts with capsid protein VP3; this interaction may be important for virion morphogenesis. As to quaternary structure, interacts with protein 3CD. In terms of assembly, homodimer. Interacts with host GBF1. Interacts (via GOLD domain) with host ACBD3 (via GOLD domain); this interaction allows the formation of a viral protein 3A/ACBD3 heterotetramer with a 2:2 stoichiometry, which will stimulate the recruitment of host PI4KB in order to synthesize PI4P at the viral RNA replication sites. Interacts with RNA-directed RNA polymerase. As to quaternary structure, interacts with protein 3AB and with RNA-directed RNA polymerase. In terms of assembly, interacts with Viral protein genome-linked and with protein 3CD. Requires Mg(2+) as cofactor. Post-translationally, specific enzymatic cleavages in vivo by the viral proteases yield processing intermediates and the mature proteins. Myristoylation is required for the formation of pentamers during virus assembly. Further assembly of 12 pentamers and a molecule of genomic RNA generates the provirion. In terms of processing, during virion maturation, immature virions are rendered infectious following cleavage of VP0 into VP4 and VP2. This maturation seems to be an autocatalytic event triggered by the presence of RNA in the capsid and it is followed by a conformational change infectious virion. Post-translationally, myristoylation is required during RNA encapsidation and formation of the mature virus particle. VPg is uridylylated by the polymerase into VPg-pUpU. This acts as a nucleotide-peptide primer for the genomic RNA replication.

It localises to the virion. The protein resides in the host cytoplasm. It is found in the host cytoplasmic vesicle membrane. Its subcellular location is the host nucleus. It carries out the reaction a ribonucleoside 5'-triphosphate + H2O = a ribonucleoside 5'-diphosphate + phosphate + H(+). The enzyme catalyses Selective cleavage of Tyr-|-Gly bond in the picornavirus polyprotein.. It catalyses the reaction RNA(n) + a ribonucleoside 5'-triphosphate = RNA(n+1) + diphosphate. The catalysed reaction is Selective cleavage of Gln-|-Gly bond in the poliovirus polyprotein. In other picornavirus reactions Glu may be substituted for Gln, and Ser or Thr for Gly.. With respect to regulation, replication or transcription is subject to high level of random mutations by the nucleotide analog ribavirin. In terms of biological role, forms an icosahedral capsid of pseudo T=3 symmetry with capsid proteins VP2 and VP3. The capsid is 300 Angstroms in diameter, composed of 60 copies of each capsid protein and enclosing the viral positive strand RNA genome. Capsid protein VP1 mainly forms the vertices of the capsid. Capsid protein VP1 interacts with host cell receptor to provide virion attachment to target host cells. This attachment induces virion internalization. Tyrosine kinases are probably involved in the entry process. After binding to its receptor, the capsid undergoes conformational changes. Capsid protein VP1 N-terminus (that contains an amphipathic alpha-helix) and capsid protein VP4 are externalized. Together, they shape a pore in the host membrane through which viral genome is translocated to host cell cytoplasm. Functionally, forms an icosahedral capsid of pseudo T=3 symmetry with capsid proteins VP2 and VP3. The capsid is 300 Angstroms in diameter, composed of 60 copies of each capsid protein and enclosing the viral positive strand RNA genome. Lies on the inner surface of the capsid shell. After binding to the host receptor, the capsid undergoes conformational changes. Capsid protein VP4 is released, Capsid protein VP1 N-terminus is externalized, and together, they shape a pore in the host membrane through which the viral genome is translocated into the host cell cytoplasm. Its function is as follows. Component of immature procapsids, which is cleaved into capsid proteins VP4 and VP2 after maturation. Allows the capsid to remain inactive before the maturation step. In terms of biological role, cysteine protease that cleaves viral polyprotein and specific host proteins. It is responsible for the autocatalytic cleavage between the P1 and P2 regions, which is the first cleavage occurring in the polyprotein. Also cleaves the host translation initiation factor EIF4G1, in order to shut down the capped cellular mRNA translation. Inhibits the host nucleus-cytoplasm protein and RNA trafficking by cleaving host members of the nuclear pores. Counteracts stress granule formation probably by antagonizing its assembly or promoting its dissassembly. Cleaves and inhibits host IFIH1/MDA5, thereby inhibiting the type-I IFN production and the establishment of the antiviral state. Cleaves and inhibits host MAVS, thereby inhibiting the type-I IFN production and the establishment of the antiviral state. Functionally, plays an essential role in the virus replication cycle by acting as a viroporin. Creates a pore in the host endoplasmic reticulum and as a consequence releases Ca2+ in the cytoplasm of infected cell. In turn, high levels of cytoplasmic calcium may trigger membrane trafficking and transport of viral ER-associated proteins to viroplasms, sites of viral genome replication. Induces and associates with structural rearrangements of intracellular membranes. Displays RNA-binding, nucleotide binding and NTPase activities. May play a role in virion morphogenesis and viral RNA encapsidation by interacting with the capsid protein VP3. Its function is as follows. Localizes the viral replication complex to the surface of membranous vesicles. Together with protein 3CD binds the Cis-Active RNA Element (CRE) which is involved in RNA synthesis initiation. Acts as a cofactor to stimulate the activity of 3D polymerase, maybe through a nucleid acid chaperone activity. In terms of biological role, localizes the viral replication complex to the surface of membranous vesicles. It inhibits host cell endoplasmic reticulum-to-Golgi apparatus transport and causes the disassembly of the Golgi complex, possibly through GBF1 interaction. This would result in depletion of MHC, trail receptors and IFN receptors at the host cell surface. Plays an essential role in viral RNA replication by recruiting ACBD3 and PI4KB at the viral replication sites, thereby allowing the formation of the rearranged membranous structures where viral replication takes place. Functionally, acts as a primer for viral RNA replication and remains covalently bound to viral genomic RNA. VPg is uridylylated prior to priming replication into VPg-pUpU. The oriI viral genomic sequence may act as a template for this. The VPg-pUpU is then used as primer on the genomic RNA poly(A) by the RNA-dependent RNA polymerase to replicate the viral genome. During genome replication, the VPg-RNA linkage is removed by the host TDP2, thereby accelerating replication. During the late stage of the replication cycle, host TDP2 is excluded from sites of viral RNA synthesis and encapsidation, allowing for the generation of progeny virions. Involved in the viral replication complex and viral polypeptide maturation. It exhibits protease activity with a specificity and catalytic efficiency that is different from protease 3C. Protein 3CD lacks polymerase activity. Protein 3CD binds to the 5'UTR of the viral genome. Its function is as follows. Replicates the viral genomic RNA on the surface of intracellular membranes. May form linear arrays of subunits that propagate along a strong head-to-tail interaction called interface-I. Covalently attaches UMP to a tyrosine of VPg, which is used to prime RNA synthesis. The positive stranded RNA genome is first replicated at virus induced membranous vesicles, creating a dsRNA genomic replication form. This dsRNA is then used as template to synthesize positive stranded RNA genomes. ss(+)RNA genomes are either translated, replicated or encapsidated. In terms of biological role, major viral protease that mediates proteolytic processing of the polyprotein. Cleaves host EIF5B, contributing to host translation shutoff. Also cleaves host PABPC1, contributing to host translation shutoff. Cleaves host NLRP1, triggers host N-glycine-mediated degradation of the autoinhibitory NLRP1 N-terminal fragment. This is Genome polyprotein from Coxsackievirus A24 (strain EH24/70).